A 134-amino-acid polypeptide reads, in one-letter code: MSWQAYVDDHLMCDIEGHEGHRLTAAAIVGHDGSVWAQSATFPQFKPEEMNGIMTDFNEPGHLAPTGLHLGGTKYMVIQGEAGAVIRGKKGSGGITIKKTGQALVFGIYEEPVTPGQCNMVVERLGDYLIEQGL.

Residues Cys-13 and Cys-118 are joined by a disulfide bond. The short motif at 84–100 is the Involved in PIP2 interaction element; that stretch reads AVIRGKKGSGGITIKKT. Residue Thr-114 is modified to Phosphothreonine.

The protein belongs to the profilin family. Occurs in many kinds of cells as a complex with monomeric actin in a 1:1 ratio. In terms of processing, phosphorylated by MAP kinases.

It is found in the cytoplasm. It localises to the cytoskeleton. Binds to actin and affects the structure of the cytoskeleton. At high concentrations, profilin prevents the polymerization of actin, whereas it enhances it at low concentrations. In Olea europaea (Common olive), this protein is Profilin-2.